Consider the following 379-residue polypeptide: uncharacterized protein (379 aa).

Belongs to the glycosyltransferase 28 family.

This is an uncharacterized protein from Methanosarcina mazei (strain ATCC BAA-159 / DSM 3647 / Goe1 / Go1 / JCM 11833 / OCM 88) (Methanosarcina frisia).